A 304-amino-acid polypeptide reads, in one-letter code: Dihydroorotate dehydrogenase B (NAD(+)), catalytic subunit (304 aa).

Residues S20 and 44-45 (KA) contribute to the FMN site. Residues K44 and 68-72 (NAIGL) contribute to the substrate site. Residues N98 and N126 each contribute to the FMN site. Residue N126 participates in substrate binding. The Nucleophile role is filled by C129. FMN is bound by residues K164 and I190. Substrate is bound at residue 191 to 192 (NT). FMN is bound by residues G216, 242 to 243 (GG), and 264 to 265 (GT).

The protein belongs to the dihydroorotate dehydrogenase family. Type 1 subfamily. Heterotetramer of 2 PyrK and 2 PyrD type B subunits. FMN is required as a cofactor.

The protein resides in the cytoplasm. The enzyme catalyses (S)-dihydroorotate + NAD(+) = orotate + NADH + H(+). It participates in pyrimidine metabolism; UMP biosynthesis via de novo pathway; orotate from (S)-dihydroorotate (NAD(+) route): step 1/1. In terms of biological role, catalyzes the conversion of dihydroorotate to orotate with NAD(+) as electron acceptor. The chain is Dihydroorotate dehydrogenase B (NAD(+)), catalytic subunit (pyrD) from Oceanobacillus iheyensis (strain DSM 14371 / CIP 107618 / JCM 11309 / KCTC 3954 / HTE831).